The chain runs to 85 residues: uncharacterized protein (85 aa).

This sequence belongs to the ycf76 family.

The protein resides in the plastid. It localises to the chloroplast. This is an uncharacterized protein from Zea mays (Maize).